The primary structure comprises 396 residues: NADH-quinone oxidoreductase subunit D (396 aa).

It belongs to the complex I 49 kDa subunit family. NDH-1 is composed of 14 different subunits. Subunits NuoB, C, D, E, F, and G constitute the peripheral sector of the complex.

The protein resides in the cell inner membrane. The enzyme catalyses a quinone + NADH + 5 H(+)(in) = a quinol + NAD(+) + 4 H(+)(out). Its function is as follows. NDH-1 shuttles electrons from NADH, via FMN and iron-sulfur (Fe-S) centers, to quinones in the respiratory chain. The immediate electron acceptor for the enzyme in this species is believed to be ubiquinone. Couples the redox reaction to proton translocation (for every two electrons transferred, four hydrogen ions are translocated across the cytoplasmic membrane), and thus conserves the redox energy in a proton gradient. This chain is NADH-quinone oxidoreductase subunit D, found in Brucella canis (strain ATCC 23365 / NCTC 10854 / RM-666).